Here is a 207-residue protein sequence, read N- to C-terminus: Keratin-associated protein 27-1 (207 aa).

A disordered region spans residues 184–207 (QLLESSPGVEPTCCVTGGSQLPSK).

The protein belongs to the PMG family. Interacts with hair keratins.

In the hair cortex, hair keratin intermediate filaments are embedded in an interfilamentous matrix, consisting of hair keratin-associated proteins (KRTAP), which are essential for the formation of a rigid and resistant hair shaft through their extensive disulfide bond cross-linking with abundant cysteine residues of hair keratins. The matrix proteins include the high-sulfur and high-glycine-tyrosine keratins. In Homo sapiens (Human), this protein is Keratin-associated protein 27-1 (KRTAP27-1).